Consider the following 467-residue polypeptide: Cysteine protease ATG4a (467 aa).

A disordered region spans residues 1–35; the sequence is MKALCDRFVPQQCSSSSKSDTHDKSPLVSDSGPSD. Cys170 serves as the catalytic Nucleophile. Active-site residues include Asp364 and His366. The interval 448-467 is disordered; that stretch reads NYGFADDDSEDEREDDWQML. Residues 452 to 467 show a composition bias toward acidic residues; it reads ADDDSEDEREDDWQML.

It belongs to the peptidase C54 family. As to quaternary structure, interacts with ATG8. As to expression, constitutively expressed.

The protein localises to the cytoplasm. It catalyses the reaction [protein]-C-terminal L-amino acid-glycyl-phosphatidylethanolamide + H2O = [protein]-C-terminal L-amino acid-glycine + a 1,2-diacyl-sn-glycero-3-phosphoethanolamine. Cysteine protease that plays a key role in autophagy by mediating both proteolytic activation and delipidation of ATG8 family proteins. The protease activity is required for proteolytic activation of ATG8 family proteins: cleaves the C-terminal amino acid of ATG8 proteins to reveal a C-terminal glycine. Exposure of the glycine at the C-terminus is essential for ATG8 proteins conjugation to phosphatidylethanolamine (PE) and insertion to membranes, which is necessary for autophagy. In addition to the protease activity, also mediates delipidation of PE-conjugated ATG8 proteins. This Arabidopsis thaliana (Mouse-ear cress) protein is Cysteine protease ATG4a.